The chain runs to 664 residues: Protein fem-1 homolog CG6966 (664 aa).

ANK repeat units lie at residues Asn-40–Gln-70, Glu-82–Ser-111, Thr-115–Val-144, His-148–Arg-177, Lys-181–Val-210, and Tyr-213–Glu-242. TPR repeat units follow at residues Ile-245–Glu-279 and Ser-335–Ile-368. The interval Gln-433 to Ser-460 is disordered. The segment covering Ser-450 to Ser-460 has biased composition (low complexity). 2 ANK repeats span residues Phe-529–Ala-571 and Ala-575–Thr-605.

It belongs to the fem-1 family. In terms of assembly, component of a CRL2 E3 ubiquitin-protein ligase complex, also named ECS (Elongin BC-CUL2/5-SOCS-box protein) complex.

It functions in the pathway protein modification; protein ubiquitination. Functionally, substrate-recognition component of a Cul2-RING (CRL2) E3 ubiquitin-protein ligase complex of the DesCEND (destruction via C-end degrons) pathway, which recognizes a C-degron located at the extreme C terminus of target proteins, leading to their ubiquitination and degradation. The C-degron recognized by the DesCEND pathway is usually a motif of less than ten residues and can be present in full-length proteins, truncated proteins or proteolytically cleaved forms. This is Protein fem-1 homolog CG6966 from Drosophila melanogaster (Fruit fly).